The sequence spans 361 residues: Trans-enoyl reductase gkaC (361 aa).

In terms of domain architecture, Enoyl reductase (ER) spans 15–357 (EDVGSFEISR…RREISGKKMV (343 aa)). Residues 48–51 (CDWK), 172–175 (SSAS), 195–198 (SPKN), tyrosine 213, 260–261 (FE), and 351–352 (IS) contribute to the NADP(+) site.

This sequence belongs to the zinc-containing alcohol dehydrogenase family. In terms of assembly, monomer.

Its pathway is mycotoxin biosynthesis. Trans-enoyl reductasee; part of the gene cluster that mediates the biosynthesis of GKK1032, fungal natural products containing a macrocyclic para-cyclophane connected to a decahydrofluorene ring system that show potent antitumor activities. Within the pathway, the PKS-NRPS gkaA, with the help of the trans-enoyl reductase gkaC, synthesize the polyketide-tyrosyl acyl thioester product which can be reductively off-loaded by the terminal reductase (R) domain in gkaA. The PKS module of gkaA acts in combination with the trans-acting enoyl reductase gkaC to produce a methylated polyketide attached to the ACP domain. In parallel, the adenylation (A) domain of the NRPS module activated L-tyrosine, which is then transferred to the ACP domain. The condensation (C) domain subsequently links this group to the polyketide chain, forming an enzyme-bound amide. The alpha/beta hydrolase gkaG is then required to catalyze the subsequent Knoevenagel condensation that affords the 3-pyrrolin-2-one ring, whereas the three proteins gkaB, gkadX and gkaZ then function synergistically to form the cyclophane. The chain is Trans-enoyl reductase gkaC from Penicillium citrinum.